A 203-amino-acid polypeptide reads, in one-letter code: Probable deoxycytidylate deaminase (203 aa).

One can recognise a CMP/dCMP-type deaminase domain in the interval 27–163 (HWDDYFMATS…PTYRASKRML (137 aa)). H102 is a binding site for Zn(2+). Catalysis depends on E104, which acts as the Proton donor. C128 and C131 together coordinate Zn(2+).

The protein belongs to the cytidine and deoxycytidylate deaminase family. The cofactor is Zn(2+).

It carries out the reaction dCMP + H2O + H(+) = dUMP + NH4(+). Functionally, supplies the nucleotide substrate for thymidylate synthetase. This is Probable deoxycytidylate deaminase from Drosophila melanogaster (Fruit fly).